We begin with the raw amino-acid sequence, 144 residues long: Large ribosomal subunit protein uL11 (144 aa).

The protein belongs to the universal ribosomal protein uL11 family. As to quaternary structure, part of the ribosomal stalk of the 50S ribosomal subunit. Interacts with L10 and the large rRNA to form the base of the stalk. L10 forms an elongated spine to which L12 dimers bind in a sequential fashion forming a multimeric L10(L12)X complex. Post-translationally, one or more lysine residues are methylated.

Its function is as follows. Forms part of the ribosomal stalk which helps the ribosome interact with GTP-bound translation factors. The sequence is that of Large ribosomal subunit protein uL11 from Gluconobacter oxydans (strain 621H) (Gluconobacter suboxydans).